Here is a 76-residue protein sequence, read N- to C-terminus: Cyclin-dependent kinases regulatory subunit (76 aa).

It belongs to the CKS family. In terms of assembly, forms a homohexamer that can probably bind six kinase subunits.

In terms of biological role, binds to the catalytic subunit of the cyclin dependent kinases and is essential for their biological function. The polypeptide is Cyclin-dependent kinases regulatory subunit (Patella vulgata (Common limpet)).